The sequence spans 928 residues: Chitin synthase 2 (928 aa).

2 disordered regions span residues 1–45 and 110–179; these read MAYN…EAYA and AYYT…SPAP. The span at 17–28 shows a compositional bias: polar residues; the sequence is PSAQPQYDSRSP. The span at 130 to 140 shows a compositional bias: basic and acidic residues; that stretch reads PSHDEPYRPDT. Transmembrane regions (helical) follow at residues 472-492, 570-589, 613-633, 644-664, 678-698, 723-743, 753-773, 854-874, and 893-913; these read SAFGFISVLPGAFCAYRYVAL, WLNGSFFAAVYAVAHVYQLW, LFAWFAIGNFFLVFRLLTASL, TVLGVVFEFVYLGTLLYCFIL, MMMVIFWSVLMVWLTFASIFL, FFGLIVSLASTYVLWFVASFL, CFLQYIVLTPTYINVLNIYAF, VTAWMITNFILVAAVLNIAGF, and VILWSVAGLSLFRFTGACWFL.

It belongs to the chitin synthase family. Class I subfamily.

The protein localises to the cell membrane. The catalysed reaction is [(1-&gt;4)-N-acetyl-beta-D-glucosaminyl](n) + UDP-N-acetyl-alpha-D-glucosamine = [(1-&gt;4)-N-acetyl-beta-D-glucosaminyl](n+1) + UDP + H(+). Functionally, polymerizes chitin, a structural polymer of the cell wall and septum, by transferring the sugar moiety of UDP-GlcNAc to the non-reducing end of the growing chitin polymer. CHS2 plays a synergistic role to CHS1 in normal yeast cell reproductive growth, even if this role is less predominant than for CHS1. With CHS3, plays an important role in virulence. In Exophiala dermatitidis (Black yeast-like fungus), this protein is Chitin synthase 2.